We begin with the raw amino-acid sequence, 175 residues long: Shikimate kinase (175 aa).

14–19 (GAGKST) contributes to the ATP binding site. Residue S18 participates in Mg(2+) binding. Substrate contacts are provided by D36, R60, and G82. Residue R120 participates in ATP binding. R140 contacts substrate. Residue Q157 coordinates ATP.

It belongs to the shikimate kinase family. In terms of assembly, monomer. The cofactor is Mg(2+).

It is found in the cytoplasm. It carries out the reaction shikimate + ATP = 3-phosphoshikimate + ADP + H(+). Its pathway is metabolic intermediate biosynthesis; chorismate biosynthesis; chorismate from D-erythrose 4-phosphate and phosphoenolpyruvate: step 5/7. Functionally, catalyzes the specific phosphorylation of the 3-hydroxyl group of shikimic acid using ATP as a cosubstrate. The sequence is that of Shikimate kinase from Actinobacillus succinogenes (strain ATCC 55618 / DSM 22257 / CCUG 43843 / 130Z).